The sequence spans 250 residues: Orotidine 5'-phosphate decarboxylase (250 aa).

Residues aspartate 9, lysine 40, 67 to 76, threonine 132, arginine 190, glutamine 204, glycine 224, and arginine 225 each bind substrate; that span reads DLKFHDIPNT. The active-site Proton donor is lysine 69.

It belongs to the OMP decarboxylase family. Type 1 subfamily. As to quaternary structure, homodimer.

The enzyme catalyses orotidine 5'-phosphate + H(+) = UMP + CO2. Its pathway is pyrimidine metabolism; UMP biosynthesis via de novo pathway; UMP from orotate: step 2/2. In terms of biological role, catalyzes the decarboxylation of orotidine 5'-monophosphate (OMP) to uridine 5'-monophosphate (UMP). This is Orotidine 5'-phosphate decarboxylase from Nitratidesulfovibrio vulgaris (strain DSM 19637 / Miyazaki F) (Desulfovibrio vulgaris).